Here is a 994-residue protein sequence, read N- to C-terminus: ASI1-immunoprecipitated protein 2 (994 aa).

Disordered stretches follow at residues 39 to 182 (AEFS…SGEN) and 187 to 206 (KADE…NDPE). Residues 45-54 (KSDESSDENS) are compositionally biased toward basic and acidic residues. Positions 60–102 (SQCSFNGDNLLRSSGVNAPGSSHNTSSEASHLVNSNHDTSSEN) are enriched in polar residues. Composition is skewed to basic and acidic residues over residues 119-140 (LLDR…DHQA) and 148-163 (KVKE…EKKN). The segment at 212–263 (VKVCDTCGDAGREDLLAICSRCSDGAEHTYCMRVMLKKVPKGYWLCEECKFA) adopts a PHD-type zinc-finger fold. Zn(2+) is bound by residues Cys215, Cys218, Cys230, Cys233, His239, Cys242, Cys257, and Cys260. Disordered regions lie at residues 342–567 (AHYS…NNKG) and 839–875 (CSNP…TDRT). The span at 371-384 (SFLKSNSFNSLSSR) shows a compositional bias: low complexity. Polar residues-rich tracts occupy residues 417–435 (VGKS…NCND) and 449–464 (TEAN…NSSI). Composition is skewed to basic and acidic residues over residues 469-478 (SPRDLKDLQS), 536-552 (PRSR…KDAV), and 858-875 (DTFR…TDRT).

As to quaternary structure, component of the ASI1-AIPP1-EDM2 (AAE) RNA regulatory complex composed of at least AIPP1/EDM3, ASI1 and EDM2 and may contain CPL2, AIPP2 and AIPP3/BDT1. Part of the BAH-PHD bivalent histone reader complex that contains AIPP2, PAIPP2 and AIPP3/BDT1; the BAH-PHD module associates with CPL2 to form the BAH-PHD-CPL2 complex (BPC) for transcriptional repression. Binds directly to ASI1, AIPP3/BDT1 and CPL2 but not to PAIPP2. Expressed ubiquitously.

Together with AIPP3/BDT1 and PAIPP2, cooperates to form a BAH-PHD bivalent histone reader complex able to read histone H3 lysine 27 trimethylation (H3K27me3) and low-methylated H3K4 histone marks in order to regulate transcription, especially to prevent early flowering; promotes AIPP3/BDT1 binding to H3K27me3. CPL2 is subsequently recruited to form a BAH-PHD-CPL2 complex (BPC) in order to silence several H3K27me3 and low-methylated H3K4 enriched loci, including AGO5, via the phosphorylation state-dependent inhibition of Pol II release from the transcriptional start site (e.g. Ser5P-Pol II dephosphorylation). The BPC complex represses flowering by inhibiting the expression of several genes, including AGL6, FT, FUL and SOC1. Prevents the accumulation of intronic heterochromatin-containing genes (e.g. IBM1, At3g05410 and RPP7). This Arabidopsis thaliana (Mouse-ear cress) protein is ASI1-immunoprecipitated protein 2.